Consider the following 147-residue polypeptide: Ubiquitin-conjugating enzyme E2 D3 (147 aa).

In terms of domain architecture, UBC core spans 1–147 (MALKRINKEL…SREWTQKYAM (147 aa)). The cysteines at positions 21 and 107 are disulfide-linked. C85 (glycyl thioester intermediate) is an active-site residue.

The protein belongs to the ubiquitin-conjugating enzyme family. In terms of assembly, interacts with SCF (SKP1-CUL1-F-box protein) E3 ubiquitin ligase complex; when Cullin is neddylated, the interaction between the E2 and the SCF complex is strengthened. Interacts with DAPK3. Interacts with BRCA1; the DNA damage checkpoint promotes the association with BRCA1 after ionizing radiation. Interacts non-covalently with ubiquitin. Interacts with E3 ubiquitin-protein ligase CBLC. Interacts with UBTD1. Interacts with RIGI and RNF135; involved in RIGI ubiquitination and activation. Phosphorylated by AURKB.

The protein resides in the cell membrane. Its subcellular location is the endosome membrane. It carries out the reaction S-ubiquitinyl-[E1 ubiquitin-activating enzyme]-L-cysteine + [E2 ubiquitin-conjugating enzyme]-L-cysteine = [E1 ubiquitin-activating enzyme]-L-cysteine + S-ubiquitinyl-[E2 ubiquitin-conjugating enzyme]-L-cysteine.. It catalyses the reaction S-ubiquitinyl-[E1 ubiquitin-activating enzyme]-L-cysteine + [acceptor protein]-L-lysine = [E1 ubiquitin-activating enzyme]-L-cysteine + N(6)-monoubiquitinyl-[acceptor protein]-L-lysine.. Its pathway is protein modification; protein ubiquitination. Its function is as follows. Accepts ubiquitin from the E1 complex and catalyzes its covalent attachment to other proteins. In vitro catalyzes 'Lys-11'-, as well as 'Lys-48'-linked polyubiquitination. Cooperates with the E2 CDC34 and the SCF(FBXW11) E3 ligase complex for the polyubiquitination of NFKBIA leading to its subsequent proteasomal degradation. Acts as an initiator E2, priming the phosphorylated NFKBIA target at positions 'Lys-21' and/or 'Lys-22' with a monoubiquitin. Ubiquitin chain elongation is then performed by CDC34, building ubiquitin chains from the UBE2D3-primed NFKBIA-linked ubiquitin. Also acts as an initiator E2, in conjunction with RNF8, for the priming of PCNA. Monoubiquitination of PCNA, and its subsequent polyubiquitination, are essential events in the operation of the DNA damage tolerance (DDT) pathway that is activated after DNA damage caused by UV or chemical agents during S-phase. Associates with the BRCA1/BARD1 E3 ligase complex to perform ubiquitination at DNA damage sites following ionizing radiation leading to DNA repair. Targets DAPK3 for ubiquitination which influences promyelocytic leukemia protein nuclear body (PML-NB) formation in the nucleus. In conjunction with the MDM2 and TOPORS E3 ligases, functions ubiquitination of p53/TP53. In conjunction with the CBL E3 ligase, targets EGFR for polyubiquitination at the plasma membrane as well as during its internalization and transport on endosomes. In conjunction with the STUB1 E3 quality control E3 ligase, ubiquitinates unfolded proteins to catalyze their immediate destruction. Together with RNF135, catalyzes the viral RNA-dependent 'Lys-63'-linked polyubiquitination of RIGI to activate the downstream signaling pathway that leads to interferon beta production. Together with ZNF598, catalyzes ubiquitination of 40S ribosomal proteins in response to ribosome collisions. In cooperation with the GATOR2 complex, catalyzes 'Lys-6'-linked ubiquitination of NPRL2. This chain is Ubiquitin-conjugating enzyme E2 D3 (UBE2D3), found in Homo sapiens (Human).